The sequence spans 256 residues: PHD finger protein ALFIN-LIKE 4 (256 aa).

The tract at residues 149–195 is disordered; it reads QSKTANGSSKNKSGSKPPKRPNSDSKPQKQVQAKYEEENGGRGNGGD. Positions 154–164 are enriched in low complexity; sequence NGSSKNKSGSK. A PHD-type zinc finger spans residues 200–252; the sequence is ETICGACGEAYANGEFWICCDICETWFHGKCVRITPAKAEHIKHYKCPGCSNK.

The protein belongs to the Alfin family. Interacts with H3K4me3 and to a lesser extent with H3K4me2.

It is found in the nucleus. Histone-binding component that specifically recognizes H3 tails trimethylated on 'Lys-4' (H3K4me3), which mark transcription start sites of virtually all active genes. The protein is PHD finger protein ALFIN-LIKE 4 of Oryza sativa subsp. indica (Rice).